Here is a 545-residue protein sequence, read N- to C-terminus: Glutamine-dependent NAD(+) synthetase (545 aa).

A CN hydrolase domain is found at 5 to 247 (LRIAMAQFDF…DQWLVVDYMR (243 aa)). The active-site Proton acceptor; for glutaminase activity is Glu-46. Residue Lys-113 is the For glutaminase activity of the active site. Residue Tyr-119 coordinates L-glutamine. The Nucleophile; for glutaminase activity role is filled by Cys-151. 2 residues coordinate L-glutamine: Ser-177 and Lys-183. A ligase region spans residues 269–545 (VWRAVVRGVQ…RYPISNAYRG (277 aa)). Residue 292–299 (GLSGGIDS) participates in ATP binding. Asn-375 serves as a coordination point for deamido-NAD(+). Thr-399 serves as a coordination point for ATP. Deamido-NAD(+) contacts are provided by Glu-404 and Lys-516.

It in the C-terminal section; belongs to the NAD synthetase family.

The catalysed reaction is deamido-NAD(+) + L-glutamine + ATP + H2O = L-glutamate + AMP + diphosphate + NAD(+) + H(+). It participates in cofactor biosynthesis; NAD(+) biosynthesis; NAD(+) from deamido-NAD(+) (L-Gln route): step 1/1. Its function is as follows. Catalyzes the ATP-dependent amidation of deamido-NAD to form NAD. Uses L-glutamine as a nitrogen source. The protein is Glutamine-dependent NAD(+) synthetase of Xylella fastidiosa (strain 9a5c).